The primary structure comprises 519 residues: MISVESKLNLDFNLVEKARAKAKAIAIDTQEFIEKHTTVTVERAVCRLLGIDGVDTDEVPLPNIVVDHIKENNGLNLGAAMYIANAVLNTGKTPQEIAQAISAGELDLTKLPMKDLFEVKTKALSMAKETVEKIKNNRSIRESRFEEYGDKSGPLLYVIVATGNIYEDITQAVAAAKQGADVIAVIRTTGQSLLDYVPYGATTEGFGGTYATQENFRLMREALDKVGAEVGKYIRLCNYCSGLCMPEIAAMGAIERLDVMLNDALYGILFRDINMQRTMIDQNFSRIINGFAGVIINTGEDNYLTTADAFEEAHTVLASQFINEQFALLAGLPEEQMGLGHAFEMDPELKNGFLYELSQAQMAREIFPKAPLKYMPPTKFMTGNIFKGHIQDALFNMVTIMTNQRIHLLGMLTEALHTPFMSDRALSIENAQYIFNNMESISEEIQFKEDGLIQKRAGFVLEKANELLEEIEQLGLFDTLEKGIFGGVKRPKDGGKGLNGVVSKDENYYNPFVELMLNK.

Position 57–59 (57–59 (DEV)) interacts with adenosylcob(III)alamin. Residues 187–192 (RTTGQS), Ser-241, Tyr-266, Arg-271, and Asn-302 each bind pyridoxal 5'-phosphate.

This sequence belongs to the KamD family. In terms of assembly, heterotetramer of 2 alpha and 2 beta subunits. Requires adenosylcob(III)alamin as cofactor. The cofactor is pyridoxal 5'-phosphate.

The catalysed reaction is (3S)-3,6-diaminohexanoate = (3S,5S)-3,5-diaminohexanoate. It catalyses the reaction D-lysine = (2R,5S)-2,5-diaminohexanoate. It functions in the pathway amino-acid metabolism; lysine degradation. With respect to regulation, rapidly inactivated in the presence of D-lysine and to a lesser extent in the absence of adenosylcobalamin (Adocbl). Activity is stable in the presence of Adocbl when D-lysine is absent. Adocbl imparts thermal stability at 37 degrees Celsius. Catalyzes the migration of the L-beta-lysine and D-lysine epsilon amino group to the delta carbon to produce 3,5-diaminohexanoate and 2,5-diaminohexanoate, respectively. The sequence is that of Lysine 5,6-aminomutase alpha subunit (kamD) from Acetoanaerobium sticklandii (strain ATCC 12662 / DSM 519 / JCM 1433 / CCUG 9281 / NCIMB 10654 / HF) (Clostridium sticklandii).